The chain runs to 454 residues: Exopolyphosphatase PRUNE1 (454 aa).

M1 is subject to N-acetylmethionine. Mn(2+)-binding residues include D28, D30, D106, and D179. Residues 106 to 108 (DHH) carry the DHH motif motif. Residues 394-421 (SLIAGLSQDDEDPPLPPTPMNSLVDECP) form an essential for homodimerization region. The disordered stretch occupies residues 398-421 (GLSQDDEDPPLPPTPMNSLVDECP). S400 carries the post-translational modification Phosphoserine. T411 carries the phosphothreonine modification. S415 is modified (phosphoserine).

This sequence belongs to the PPase class C family. Prune subfamily. In terms of assembly, homooligomer. Able to homodimerize via its C-terminal domain. Interacts with NME1. Interacts with GSK3; at focal adhesion complexes where paxillin and vinculin are colocalized. Interacts with alpha and beta tubulin. Mn(2+) serves as cofactor.

It localises to the cytoplasm. It is found in the nucleus. The protein localises to the cell junction. Its subcellular location is the focal adhesion. The catalysed reaction is diphosphate + H2O = 2 phosphate + H(+). Its activity is regulated as follows. Activated by magnesium ions and inhibited by manganese ions. Inhibited by dipyridamole, moderately sensitive to IBMX and inhibited by vinpocetine. Its function is as follows. Phosphodiesterase (PDE) that has higher activity toward cAMP than cGMP, as substrate. Plays a role in cell proliferation, migration and differentiation, and acts as a negative regulator of NME1. Plays a role in the regulation of neurogenesis. Involved in the regulation of microtubule polymerization. In Rattus norvegicus (Rat), this protein is Exopolyphosphatase PRUNE1 (Prune1).